Reading from the N-terminus, the 43-residue chain is Protein PsbN (43 aa).

Residues threonine 5 to phenylalanine 27 form a helical membrane-spanning segment.

Belongs to the PsbN family.

It is found in the plastid. Its subcellular location is the chloroplast thylakoid membrane. May play a role in photosystem I and II biogenesis. This chain is Protein PsbN, found in Thuja plicata (Western red-cedar).